Reading from the N-terminus, the 162-residue chain is NADH-quinone oxidoreductase subunit I (162 aa).

4Fe-4S ferredoxin-type domains lie at 54–83 and 93–122; these read RRYE…IESE and TRYD…ETQI. 8 residues coordinate [4Fe-4S] cluster: C63, C66, C69, C73, C102, C105, C108, and C112.

It belongs to the complex I 23 kDa subunit family. As to quaternary structure, NDH-1 is composed of 14 different subunits. Subunits NuoA, H, J, K, L, M, N constitute the membrane sector of the complex. Requires [4Fe-4S] cluster as cofactor.

The protein localises to the cell inner membrane. The enzyme catalyses a quinone + NADH + 5 H(+)(in) = a quinol + NAD(+) + 4 H(+)(out). In terms of biological role, NDH-1 shuttles electrons from NADH, via FMN and iron-sulfur (Fe-S) centers, to quinones in the respiratory chain. The immediate electron acceptor for the enzyme in this species is believed to be ubiquinone. Couples the redox reaction to proton translocation (for every two electrons transferred, four hydrogen ions are translocated across the cytoplasmic membrane), and thus conserves the redox energy in a proton gradient. The sequence is that of NADH-quinone oxidoreductase subunit I from Burkholderia cenocepacia (strain HI2424).